A 371-amino-acid chain; its full sequence is Deoxyhypusine synthase (371 aa).

NAD(+) contacts are provided by residues 112–116 (SNLVT), 138–140 (SAG), glutamate 144, and aspartate 245. 143–144 (EE) lines the spermidine pocket. Residue aspartate 250 participates in spermidine binding. Glycine 291 is an NAD(+) binding site. Histidine 296 provides a ligand contact to spermidine. 316–317 (TG) is an NAD(+) binding site. Residues 322–324 (GSD) and 331–337 (EAVSWGK) contribute to the spermidine site. The active-site Nucleophile is lysine 337. Residue 350–351 (EA) participates in NAD(+) binding.

The protein belongs to the deoxyhypusine synthase family. NAD(+) is required as a cofactor.

The enzyme catalyses [eIF5A protein]-L-lysine + spermidine = [eIF5A protein]-deoxyhypusine + propane-1,3-diamine. The protein operates within protein modification; eIF5A hypusination. In terms of biological role, catalyzes the NAD-dependent oxidative cleavage of spermidine and the subsequent transfer of the butylamine moiety of spermidine to the epsilon-amino group of a critical lysine residue of the eIF-5A precursor protein to form the intermediate deoxyhypusine residue. This is the first step of the post-translational modification of that lysine into an unusual amino acid residue named hypusine. Hypusination is unique to mature eIF-5A factor and is essential for its function. The protein is Deoxyhypusine synthase of Caenorhabditis elegans.